The following is a 173-amino-acid chain: MASIPATVATVAQANMVAPFTGLKSNAAFPVTKKVNDFSTLPSNGGRVQCMKVWPPLGKKRYETLSYLPNLTESQLAKEVDYLLRNKWVPCLEFELEHGFVYRENARSPGYYDGRYWTMWKLPMFGCTDSAQVMKELQECKKEYPQAWIRIIGFDNVRQVQCISFIASKPDGF.

The transit peptide at 1–49 (MASIPATVATVAQANMVAPFTGLKSNAAFPVTKKVNDFSTLPSNGGRVQ) directs the protein to the chloroplast.

It belongs to the RuBisCO small chain family. Heterohexadecamer of 8 large and 8 small subunits.

It is found in the plastid. The protein localises to the chloroplast. RuBisCO catalyzes two reactions: the carboxylation of D-ribulose 1,5-bisphosphate, the primary event in carbon dioxide fixation, as well as the oxidative fragmentation of the pentose substrate. Both reactions occur simultaneously and in competition at the same active site. Although the small subunit is not catalytic it is essential for maximal activity. The protein is Ribulose bisphosphate carboxylase small subunit, chloroplastic 3 of Flaveria pringlei.